The chain runs to 276 residues: Insulin-like growth factor-binding protein 2-A (276 aa).

A signal peptide spans 1–22; it reads MLSYVSCGLLLALVTFHGTARS. The 82-residue stretch at 24 to 105 folds into the IGFBP N-terminal domain; that stretch reads MVFRCPSCTA…VQGLGRCGRK (82 aa). 9 disulfides stabilise this stretch: C28–C55, C31–C57, C39–C58, C46–C61, C69–C82, C76–C102, C180–C214, C225–C236, and C238–C259. In terms of domain architecture, Thyroglobulin type-1 spans 177-259; the sequence is QSQCQQELDQ…SPLIRGDPNC (83 aa). Residues 254 to 256 carry the Cell attachment site motif; that stretch reads RGD.

As to quaternary structure, interacts equally well with igf1 and igf2. As to expression, in embryos at 24 hpf, initially expressed in the lens and cranial region, and at 48 and 72 hpf in the brain boundary vasculature. Expression in these regions persists throughout the hatching period and by 96 hpf expression is most abundant in the liver. In both male and female adults, highest expression is in the liver with modest expression in the brain. In male but not females adults, expressed at a low level in muscle and gonad. Also expressed in the adult intestine.

It is found in the secreted. Functionally, IGF-binding proteins prolong the half-life of the IGFs and have been shown to either inhibit or stimulate the growth promoting effects of the IGFs on cell culture. They alter the interaction of IGFs with their cell surface receptors. The sequence is that of Insulin-like growth factor-binding protein 2-A (igfbp2a) from Danio rerio (Zebrafish).